We begin with the raw amino-acid sequence, 798 residues long: Phenylalanine--tRNA ligase beta subunit (798 aa).

Residues 39–147 (AARLAGFTLA…PSGEVGERFI (109 aa)) form the tRNA-binding domain. The 72-residue stretch at 404–475 (DHSRAYKLDA…RIASLTKLVG (72 aa)) folds into the B5 domain. Mg(2+) is bound by residues Asp-453, Asp-459, Glu-462, and Glu-463. The FDX-ACB domain occupies 704–797 (RDLQAVERDF…VAKATGGTLR (94 aa)).

This sequence belongs to the phenylalanyl-tRNA synthetase beta subunit family. Type 1 subfamily. In terms of assembly, tetramer of two alpha and two beta subunits. Mg(2+) serves as cofactor.

Its subcellular location is the cytoplasm. The enzyme catalyses tRNA(Phe) + L-phenylalanine + ATP = L-phenylalanyl-tRNA(Phe) + AMP + diphosphate + H(+). The polypeptide is Phenylalanine--tRNA ligase beta subunit (Ruegeria pomeroyi (strain ATCC 700808 / DSM 15171 / DSS-3) (Silicibacter pomeroyi)).